The sequence spans 694 residues: Elongation factor G (694 aa).

In terms of domain architecture, tr-type G spans 9–288 (DAIRNIGIMA…VIVKWLPSPL (280 aa)). GTP contacts are provided by residues 18-25 (AHIDAGKT), 82-86 (DTPGH), and 136-139 (NKMD).

This sequence belongs to the TRAFAC class translation factor GTPase superfamily. Classic translation factor GTPase family. EF-G/EF-2 subfamily.

The protein localises to the cytoplasm. In terms of biological role, catalyzes the GTP-dependent ribosomal translocation step during translation elongation. During this step, the ribosome changes from the pre-translocational (PRE) to the post-translocational (POST) state as the newly formed A-site-bound peptidyl-tRNA and P-site-bound deacylated tRNA move to the P and E sites, respectively. Catalyzes the coordinated movement of the two tRNA molecules, the mRNA and conformational changes in the ribosome. This is Elongation factor G (fusA) from Chlamydia muridarum (strain MoPn / Nigg).